Here is a 94-residue protein sequence, read N- to C-terminus: Large ribosomal subunit protein bL28 (94 aa).

Belongs to the bacterial ribosomal protein bL28 family.

This chain is Large ribosomal subunit protein bL28, found in Hyphomonas neptunium (strain ATCC 15444).